The following is a 342-amino-acid chain: Methylthioribose-1-phosphate isomerase (342 aa).

Substrate contacts are provided by residues 49-51, Arg-86, and Gln-187; that span reads RGA. Asp-228 serves as the catalytic Proton donor. 238–239 lines the substrate pocket; that stretch reads NK.

Belongs to the eIF-2B alpha/beta/delta subunits family. MtnA subfamily.

It carries out the reaction 5-(methylsulfanyl)-alpha-D-ribose 1-phosphate = 5-(methylsulfanyl)-D-ribulose 1-phosphate. Its pathway is amino-acid biosynthesis; L-methionine biosynthesis via salvage pathway; L-methionine from S-methyl-5-thio-alpha-D-ribose 1-phosphate: step 1/6. In terms of biological role, catalyzes the interconversion of methylthioribose-1-phosphate (MTR-1-P) into methylthioribulose-1-phosphate (MTRu-1-P). This chain is Methylthioribose-1-phosphate isomerase, found in Serratia proteamaculans (strain 568).